The following is a 434-amino-acid chain: UDP-N-acetylglucosamine 1-carboxyvinyltransferase 1 (434 aa).

Residue 22-23 (KN) coordinates phosphoenolpyruvate. A UDP-N-acetyl-alpha-D-glucosamine-binding site is contributed by Arg93. Residue Cys117 is the Proton donor of the active site. A 2-(S-cysteinyl)pyruvic acid O-phosphothioketal modification is found at Cys117. Residues 122–126 (RPIDQ), Asp306, and Val328 contribute to the UDP-N-acetyl-alpha-D-glucosamine site.

The protein belongs to the EPSP synthase family. MurA subfamily.

Its subcellular location is the cytoplasm. It catalyses the reaction phosphoenolpyruvate + UDP-N-acetyl-alpha-D-glucosamine = UDP-N-acetyl-3-O-(1-carboxyvinyl)-alpha-D-glucosamine + phosphate. Its pathway is cell wall biogenesis; peptidoglycan biosynthesis. Cell wall formation. Adds enolpyruvyl to UDP-N-acetylglucosamine. This Bacillus anthracis protein is UDP-N-acetylglucosamine 1-carboxyvinyltransferase 1.